The following is a 38-amino-acid chain: Large ribosomal subunit protein bL36 (38 aa).

Belongs to the bacterial ribosomal protein bL36 family.

The sequence is that of Large ribosomal subunit protein bL36 from Enterococcus faecalis (strain ATCC 700802 / V583).